We begin with the raw amino-acid sequence, 604 residues long: Elongation factor 4 1 (604 aa).

Positions 10 to 191 (EHIRNFCIIA…AIVDSVPAPT (182 aa)) constitute a tr-type G domain. GTP contacts are provided by residues 22–27 (DHGKST) and 138–141 (NKID).

It belongs to the TRAFAC class translation factor GTPase superfamily. Classic translation factor GTPase family. LepA subfamily.

It is found in the cell inner membrane. It carries out the reaction GTP + H2O = GDP + phosphate + H(+). Functionally, required for accurate and efficient protein synthesis under certain stress conditions. May act as a fidelity factor of the translation reaction, by catalyzing a one-codon backward translocation of tRNAs on improperly translocated ribosomes. Back-translocation proceeds from a post-translocation (POST) complex to a pre-translocation (PRE) complex, thus giving elongation factor G a second chance to translocate the tRNAs correctly. Binds to ribosomes in a GTP-dependent manner. In Rhodopirellula baltica (strain DSM 10527 / NCIMB 13988 / SH1), this protein is Elongation factor 4 1.